Reading from the N-terminus, the 91-residue chain is Small ribosomal subunit protein bS16 (91 aa).

The protein belongs to the bacterial ribosomal protein bS16 family. Part of the 30S ribosomal subunit.

Its function is as follows. Binds to the lower part of the body of the 30S subunit, where it stabilizes two of its domains. This chain is Small ribosomal subunit protein bS16, found in Thermus thermophilus.